Here is a 534-residue protein sequence, read N- to C-terminus: MSDSRQNSQREDNYSRDRRSRFTEDSYSRRDSQRSGNEAPRESRYYRKEEHLQERSRSRSPARDSRWKSSSSGFAPAHPPIEEPTNNGAEAAAAAARRIAESLQSTKATSSRTSYDHSEGITSTTSASPPSAPAPPLPPSSEGPAVDIPPSMADITSKVIEGDGVFMQDVEINNVRNRYILVRASTLSEIENKSGVQLFSKGRYYPNKALATDKDPPLYLHIVSHNRKDLTVALQEIESWINKDMGPLIDERRFRRREDNERNNSNSPRNFSTHGNGNGENGQPRRKWLEEKVYINLTPSRGFHLRQAIVGPQGAYVKHIQQETRTRVQIKGQGSAFIEPSTNRESDEPIHLCIMSHDPNAIQRAKVLCEDLIASVHQQYKAWKSQPKDRDQNQGNRAYNPPNRNQAFSARDSRQEKTQPTNASPAPLVTPSLPVPSIPAVPGMEAMAMPPGVTSSIAVPTTSSMPLQGMPTMFGAPGVSAPGTEAPGTGTPGLTTPGVDPYAAYGGYNAYVQYYQQQIYAQMHGVSGDQSHPQ.

Disordered regions lie at residues 1–150 (MSDS…DIPP), 252–284 (RRFR…NGQP), and 383–434 (WKSQ…PSLP). The span at 8-67 (SQREDNYSRDRRSRFTEDSYSRRDSQRSGNEAPRESRYYRKEEHLQERSRSRSPARDSRW) shows a compositional bias: basic and acidic residues. Residues 102-113 (SLQSTKATSSRT) are compositionally biased toward polar residues. A compositionally biased stretch (pro residues) spans 130 to 141 (PSAPAPPLPPSS). Residues 252-262 (RRFRRREDNER) are compositionally biased toward basic and acidic residues. A compositionally biased stretch (low complexity) spans 263 to 272 (NNSNSPRNFS). The segment covering 393 to 408 (NQGNRAYNPPNRNQAF) has biased composition (polar residues).

This is an uncharacterized protein from Schizosaccharomyces pombe (strain 972 / ATCC 24843) (Fission yeast).